We begin with the raw amino-acid sequence, 807 residues long: Mechanosensitive cation channel TMEM63A (807 aa).

At 1–51 the chain is on the extracellular side; it reads MTDSPFLELWQSRAVSVREQLGLGDRPNDSYCYNSAKNSTVLQGVTFGGIP. A glycan (N-linked (GlcNAc...) asparagine) is linked at Asn-38. A helical membrane pass occupies residues 52-74; sequence TVLLIDVSCFLFLILVFSIIRRR. Topologically, residues 75–134 are cytoplasmic; the sequence is FWDYGRIALVSEADSEPRFQRLSSTSSSGQQDFENELGCCPWLTAIFRLHDDQILEWCGE. A helical membrane pass occupies residues 135-167; the sequence is DAIHYLSFQRHIIFLLVVVSFLSLCVILPVNLS. The Extracellular segment spans residues 168-191; it reads GDLLDKDPYSFGRTTIANLQTDND. A helical membrane pass occupies residues 192–217; the sequence is LLWLHTIFAVIYLFLTVGFMRHHTQS. The Cytoplasmic segment spans residues 218–416; sequence IKYKEENLVR…CWKNLSIQGL (199 aa). The intracellular linker IL2; confers mechanosensitivity stretch occupies residues 219–414; sequence KYKEENLVRR…DICWKNLSIQ (196 aa). Residues 417-444 form a helical membrane-spanning segment; it reads RWWLQWLGINFTLFLGLFFLTTPSIILS. Over 445–462 the chain is Extracellular; it reads TMDKFNVTKPIHALNNPI. Asn-450 is a glycosylation site (N-linked (GlcNAc...) asparagine). The chain crosses the membrane as a helical span at residues 463 to 490; the sequence is ISQFFPTLLLWSFSALLPSIVYYSTLLE. Topologically, residues 491-495 are cytoplasmic; the sequence is SHWTK. The chain crosses the membrane as a helical span at residues 496 to 532; it reads SGENQIMMTKVYIFLIFMVLILPSLGLTSLDFFFRWL. Residues 533 to 554 lie on the Extracellular side of the membrane; the sequence is FDKTSSEASIRLECVFLPDQGA. Residues 555 to 586 traverse the membrane as a helical segment; that stretch reads FFVNYVIASAFIGNGMELLRLPGLILYTFRMI. Positions 555-586 are gating helix; the sequence is FFVNYVIASAFIGNGMELLRLPGLILYTFRMI. The Cytoplasmic segment spans residues 587-606; the sequence is MAKTAADRRNVKQNQAFQYE. The helical transmembrane segment at 607-624 threads the bilayer; the sequence is FGAMYAWMLCVFTVIMAY. At 625–628 the chain is on the extracellular side; it reads SITC. Residues 629–651 traverse the membrane as a helical segment; the sequence is PIIAPFGLIYILLKHMVDRHNLY. Over 652–661 the chain is Cytoplasmic; it reads FIYLPAKLEK. The chain crosses the membrane as a helical span at residues 662-689; that stretch reads GIHFAAVNQALAAPILCLFWLYFFSFLR. The Extracellular portion of the chain corresponds to 690–694; it reads LGMKA. A helical transmembrane segment spans residues 695–709; the sequence is PATLFTFLVVLLTIL. The Cytoplasmic segment spans residues 710–807; the sequence is VCLAHTCFGY…GSVAAAPQEA (98 aa). The residue at position 739 (Ser-739) is a Phosphoserine.

The protein belongs to the CSC1 (TC 1.A.17) family. In terms of assembly, monomer. N-Glycosylated.

The protein resides in the lysosome membrane. Its subcellular location is the early endosome membrane. It localises to the cell membrane. The enzyme catalyses Ca(2+)(in) = Ca(2+)(out). Its function is as follows. Mechanosensitive cation channel with low conductance and high activation threshold. In contrast to TMEM63B, does not show phospholipid scramblase activity. Acts as a regulator of lysosomal morphology by mediating lysosomal mechanosensitivity. Important for the baby's first breath and respiration throughout life. Upon lung inflation conducts cation currents in alveolar type 1 and 2 cells triggering lamellar body exocytosis and surfactant secretion into airspace. Also acts as an osmosensitive cation channel preferentially activated by hypotonic stress. This chain is Mechanosensitive cation channel TMEM63A (TMEM63A), found in Pongo abelii (Sumatran orangutan).